The chain runs to 305 residues: E3 ubiquitin-protein ligase RNF115 (305 aa).

Alanine 2 is subject to N-acetylalanine. Residues 100-110 show a composition bias toward basic and acidic residues; that stretch reads NRANERGHQTH. The segment at 100–139 is disordered; sequence NRANERGHQTHTDFWGPSRPPRLPMTRRYRSRGSTRPDRS. A Phosphoserine modification is found at serine 133. Residues 229–270 form an RING-type zinc finger; it reads CPVCKEDYTVEEKVRQLPCNHFFHSSCIVPWLELHDTCPVCR. Residues 274–305 are disordered; the sequence is NGEDSTRQTQSSEASASNRFSNDSQLHDRWTF. Polar residues predominate over residues 280 to 297; the sequence is RQTQSSEASASNRFSNDS.

As to quaternary structure, interacts with RAB7A. Interacts with EGFR and FLT3. Interacts with BST2. Interacts with STX17. Interacts with YWHAE. Phosphorylated by AKT1, allowing association with the 14-3-3 chaperones that facilitates associating with TLRs. In terms of processing, deubiquitinated by USP9X; antogonizing its autoubiquitination and subsequent proteasomal degradation. Post-translationally, RING-type zinc finger-dependent and E2-dependent autoubiquitination.

The protein resides in the cytoplasm. Its subcellular location is the cytoplasmic vesicle. It localises to the phagosome. The protein localises to the nucleus. It is found in the endoplasmic reticulum. The protein resides in the golgi apparatus. It carries out the reaction S-ubiquitinyl-[E2 ubiquitin-conjugating enzyme]-L-cysteine + [acceptor protein]-L-lysine = [E2 ubiquitin-conjugating enzyme]-L-cysteine + N(6)-ubiquitinyl-[acceptor protein]-L-lysine.. Its pathway is protein modification; protein ubiquitination. Its function is as follows. E3 ubiquitin-protein ligase that catalyzes the 'Lys-48'- and/or 'Lys-63'-linked polyubiquitination of various substrates and thereby plays a role in a number of signaling pathways including autophagy, innate immunity, cell proliferation and cell death. Plays a role in the endosomal trafficking and degradation of membrane receptors including EGFR, FLT3, MET and CXCR4 through their polyubiquitination. Participates together with BST2 in antiviral immunity by facilitating the internalization of HIV-1 virions into intracellular vesicles leading to their lysosomal degradation. Also possesses an antiviral activity independently of BST2 by promoting retroviral GAG proteins ubiquitination, redistribution to endo-lysosomal compartments and, ultimately, lysosomal degradation. Catalyzes distinct types of ubiquitination on MAVS and STING1 at different phases of viral infection to promote innate antiviral response. Mediates the 'Lys-48'-linked ubiquitination of MAVS leading to its proteasomal degradation and ubiquitinates STING1 via 'Lys-63'-linked polyubiquitination, critical for its oligomerization and the subsequent recruitment of TBK1. Plays a positive role in the autophagosome-lysosome fusion by interacting with STX17 and enhancing its stability without affecting 'Lys-48'- or 'Lys-63'-linked polyubiquitination levels, which in turn promotes autophagosome maturation. Negatively regulates TLR-induced expression of proinflammatory cytokines by catalyzing 'Lys-11'-linked ubiquitination of RAB1A and RAB13 to inhibit post-ER trafficking of TLRs to the Golgi by RAB1A and subsequently from the Golgi apparatus to the cell surface by RAB13. The sequence is that of E3 ubiquitin-protein ligase RNF115 from Mus musculus (Mouse).